A 194-amino-acid polypeptide reads, in one-letter code: Glycerol-3-phosphate acyltransferase (194 aa).

Transmembrane regions (helical) follow at residues 4–24 (EIVLIIGAYLLGSIPTGLLLA), 78–98 (EIWVAATGLAAFLGHVYTVFL), 110–130 (LGVFIGISPLSVLAALAIFVF), 137–157 (YVSLASITAAAAIPFLVALIE), and 161–181 (LLITMSVIIAALVVFKHRENI).

The protein belongs to the PlsY family. In terms of assembly, probably interacts with PlsX.

It is found in the cell inner membrane. It carries out the reaction an acyl phosphate + sn-glycerol 3-phosphate = a 1-acyl-sn-glycero-3-phosphate + phosphate. It participates in lipid metabolism; phospholipid metabolism. Functionally, catalyzes the transfer of an acyl group from acyl-phosphate (acyl-PO(4)) to glycerol-3-phosphate (G3P) to form lysophosphatidic acid (LPA). This enzyme utilizes acyl-phosphate as fatty acyl donor, but not acyl-CoA or acyl-ACP. In Geotalea daltonii (strain DSM 22248 / JCM 15807 / FRC-32) (Geobacter daltonii), this protein is Glycerol-3-phosphate acyltransferase.